Reading from the N-terminus, the 549-residue chain is ATP synthase subunit alpha (549 aa).

Position 172–179 (172–179 (GDRKTGKT)) interacts with ATP.

Belongs to the ATPase alpha/beta chains family. In terms of assembly, F-type ATPases have 2 components, CF(1) - the catalytic core - and CF(0) - the membrane proton channel. CF(1) has five subunits: alpha(3), beta(3), gamma(1), delta(1), epsilon(1). CF(0) has three main subunits: a(1), b(2) and c(9-12). The alpha and beta chains form an alternating ring which encloses part of the gamma chain. CF(1) is attached to CF(0) by a central stalk formed by the gamma and epsilon chains, while a peripheral stalk is formed by the delta and b chains.

It localises to the cell membrane. The catalysed reaction is ATP + H2O + 4 H(+)(in) = ADP + phosphate + 5 H(+)(out). Produces ATP from ADP in the presence of a proton gradient across the membrane. The alpha chain is a regulatory subunit. This chain is ATP synthase subunit alpha, found in Mycobacterium tuberculosis (strain CDC 1551 / Oshkosh).